A 506-amino-acid polypeptide reads, in one-letter code: Probable alpha-L-arabinofuranosidase B (506 aa).

The signal sequence occupies residues 1-26 (MLLPRGFNRAVVTALGVVGTGTLVAA). Residues 27–343 (GPCDIYSSGG…ANIVAAKYAV (317 aa)) form a catalytic region. Intrachain disulfides connect Cys29-Cys39, Cys89-Cys94, and Cys184-Cys185. Residue Asp227 participates in substrate binding. Glu229 functions as the Nucleophile in the catalytic mechanism. Asn230 is a binding site for substrate. Asn285 carries an N-linked (GlcNAc...) asparagine glycan. Residue Gly304 coordinates substrate. Asp305 acts as the Proton donor in catalysis. Residues 344-506 (APLTSGPSLT…VSWVVSTSFA (163 aa)) are ABD. Asn375 carries an N-linked (GlcNAc...) asparagine glycan. The cysteines at positions 409 and 447 are disulfide-linked. Residues His424, Phe427, Asp443, His471, Leu476, and Asp496 each coordinate substrate.

The protein belongs to the glycosyl hydrolase 54 family.

The protein resides in the secreted. It catalyses the reaction Hydrolysis of terminal non-reducing alpha-L-arabinofuranoside residues in alpha-L-arabinosides.. Its pathway is glycan metabolism; L-arabinan degradation. Alpha-L-arabinofuranosidase involved in the degradation of arabinoxylan, a major component of plant hemicellulose. Able to hydrolyze 1,5-, 1,3- and 1,2-alpha-linkages not only in L-arabinofuranosyl oligosaccharides, but also in polysaccharides containing terminal non-reducing L-arabinofuranoses in side chains, like L-arabinan, arabinogalactan and arabinoxylan. The sequence is that of Probable alpha-L-arabinofuranosidase B (abfB) from Aspergillus terreus (strain NIH 2624 / FGSC A1156).